Consider the following 86-residue polypeptide: Ferredoxin YfhL (86 aa).

4Fe-4S ferredoxin-type domains follow at residues 1–29 (MALL…MGDH) and 31–65 (YEIN…KDPA). 8 residues coordinate [4Fe-4S] cluster: Cys9, Cys12, Cys15, Cys19, Cys38, Cys41, Cys50, and Cys54.

[4Fe-4S] cluster serves as cofactor.

Ferredoxins are iron-sulfur proteins that transfer electrons in a wide variety of metabolic reactions. The polypeptide is Ferredoxin YfhL (yfhL) (Escherichia coli (strain K12)).